Here is a 206-residue protein sequence, read N- to C-terminus: Large ribosomal subunit protein uL4 (206 aa).

The segment at 43 to 78 (ARSGNRKQKDREEVKHTTKKPWRQKGTGRARAGMSS) is disordered. A compositionally biased stretch (basic and acidic residues) spans 49–58 (KQKDREEVKH). A compositionally biased stretch (basic residues) spans 59–70 (TTKKPWRQKGTG).

It belongs to the universal ribosomal protein uL4 family. In terms of assembly, part of the 50S ribosomal subunit.

In terms of biological role, one of the primary rRNA binding proteins, this protein initially binds near the 5'-end of the 23S rRNA. It is important during the early stages of 50S assembly. It makes multiple contacts with different domains of the 23S rRNA in the assembled 50S subunit and ribosome. Its function is as follows. Forms part of the polypeptide exit tunnel. This Cupriavidus metallidurans (strain ATCC 43123 / DSM 2839 / NBRC 102507 / CH34) (Ralstonia metallidurans) protein is Large ribosomal subunit protein uL4.